A 295-amino-acid chain; its full sequence is UTP--glucose-1-phosphate uridylyltransferase (295 aa).

It belongs to the UDPGP type 2 family.

The enzyme catalyses alpha-D-glucose 1-phosphate + UTP + H(+) = UDP-alpha-D-glucose + diphosphate. In terms of biological role, may play a role in stationary phase survival. The polypeptide is UTP--glucose-1-phosphate uridylyltransferase (galU) (Haemophilus ducreyi (strain 35000HP / ATCC 700724)).